The following is a 250-amino-acid chain: 2,3-bisphosphoglycerate-dependent phosphoglycerate mutase (250 aa).

Substrate is bound by residues 8–15 (RHGESKWN), 21–22 (TG), Arg-60, 87–90 (ERHY), Lys-98, 114–115 (RR), and 183–184 (GN). The active-site Tele-phosphohistidine intermediate is His-9. The active-site Proton donor/acceptor is the Glu-87.

It belongs to the phosphoglycerate mutase family. BPG-dependent PGAM subfamily.

The enzyme catalyses (2R)-2-phosphoglycerate = (2R)-3-phosphoglycerate. The protein operates within carbohydrate degradation; glycolysis; pyruvate from D-glyceraldehyde 3-phosphate: step 3/5. In terms of biological role, catalyzes the interconversion of 2-phosphoglycerate and 3-phosphoglycerate. The chain is 2,3-bisphosphoglycerate-dependent phosphoglycerate mutase from Borrelia recurrentis (strain A1).